A 221-amino-acid chain; its full sequence is Large ribosomal subunit protein uL16x (221 aa).

It belongs to the universal ribosomal protein uL16 family. As to quaternary structure, component of the small ribosomal subunit. Mature ribosomes consist of a small (40S) and a large (60S) subunit. The 40S subunit contains about 33 different proteins and 1 molecule of RNA (18S). The 60S subunit contains about 49 different proteins and 3 molecules of RNA (25S, 5.8S and 5S).

This Arabidopsis thaliana (Mouse-ear cress) protein is Large ribosomal subunit protein uL16x (RPL10C).